The following is a 261-amino-acid chain: MARRQVGSTRRVGDGGSFPFAGALHSKSRSSPLLSICLVLVGACLLIGYAYSGPGIFKSIKEVSKVTGDYSCTAEVQRAIPVLKKAYGDGMRKVLHVGPDTCSVVSSLLKEEETEAWGVEPYDIEDADSHCKSFVSKGLVRVADIKFPLPYRAKSFSLVIVSDALDYLSPKYLNKTVPELARVASDGVVLFAGLPGQQRAKVAELSKFGRPAKMRSASWWNRFFVQTNLEENDAPSKKFEQAVSKGLYKPACQVFHLKPLH.

Topologically, residues 1 to 35 (MARRQVGSTRRVGDGGSFPFAGALHSKSRSSPLLS) are cytoplasmic. The helical transmembrane segment at 36 to 56 (ICLVLVGACLLIGYAYSGPGI) threads the bilayer. Over 57–261 (FKSIKEVSKV…CQVFHLKPLH (205 aa)) the chain is Lumenal. A glycan (N-linked (GlcNAc...) asparagine) is linked at Asn-174.

The protein belongs to the class I-like SAM-binding methyltransferase superfamily.

It localises to the golgi apparatus membrane. Together with CGR3, required for homogalacturonan pectins (HG) methylesterification in the Golgi apparatus prior to integration into cell walls, essential for general growth and development. Promotes rosette growth. Impacts carbon (C) partitioning, photosynthesis and respiration efficiency by influencing leaf mesophyll cell walls morphology and physiology; pectin methylesterification modulates both expansion and positioning of cells in leaves, probably by changing cell walls plasticity. In Arabidopsis thaliana (Mouse-ear cress), this protein is Probable pectin methylesterase CGR2.